The following is a 130-amino-acid chain: Small ribosomal subunit protein uS8 (130 aa).

The protein belongs to the universal ribosomal protein uS8 family. In terms of assembly, part of the 30S ribosomal subunit. Contacts proteins S5 and S12.

One of the primary rRNA binding proteins, it binds directly to 16S rRNA central domain where it helps coordinate assembly of the platform of the 30S subunit. This Pseudomonas fluorescens (strain Pf0-1) protein is Small ribosomal subunit protein uS8.